A 389-amino-acid chain; its full sequence is MLLWLAQYFQDELGPLRVFNFITFRAVFATLTALVIGLVTGPAVIRMLTRLKVGQAVRTDGPQTHLIKSGTPTMGGVLILVSIGISTLLWTDLSNRFIWVVLIVTLGFGAVGWVDDYRKVVYKDPKGMASREKYMWQSIIGLFAAIYLAFSVSAPSNSQFLDLFIAWVQSGFSMDLPPKADLIVPFFKTISYPLGVWGFIALTYFVIVGTSNAVNLTDGLDGLAIMPTVMVGTALGLFAYLTGSANYSKYLFIPHIPGAGELIIFCGAMAGAGLAFLWFNAHPAQVFMGDVGALALGGALGTIAVIVRQEVVLFIMGGIFVVETLSVMLQVAYFKYTKMRTGIGKRILLMAPLHHHFEQKGWKETQVVVRFWIITMMLVLFGLSTLKLR.

10 helical membrane-spanning segments follow: residues 21–41 (FITFRAVFATLTALVIGLVTG), 70–90 (GTPTMGGVLILVSIGISTLLW), 97–117 (FIWVVLIVTLGFGAVGWVDDY), 134–154 (YMWQSIIGLFAAIYLAFSVSA), 189–209 (TISYPLGVWGFIALTYFVIVG), 222–242 (GLAIMPTVMVGTALGLFAYLT), 259–279 (AGELIIFCGAMAGAGLAFLWF), 286–306 (VFMGDVGALALGGALGTIAVI), 311–331 (VVLFIMGGIFVVETLSVMLQV), and 366–386 (QVVVRFWIITMMLVLFGLSTL).

It belongs to the glycosyltransferase 4 family. MraY subfamily. Mg(2+) serves as cofactor.

It is found in the cell inner membrane. The enzyme catalyses UDP-N-acetyl-alpha-D-muramoyl-L-alanyl-gamma-D-glutamyl-meso-2,6-diaminopimeloyl-D-alanyl-D-alanine + di-trans,octa-cis-undecaprenyl phosphate = di-trans,octa-cis-undecaprenyl diphospho-N-acetyl-alpha-D-muramoyl-L-alanyl-D-glutamyl-meso-2,6-diaminopimeloyl-D-alanyl-D-alanine + UMP. It participates in cell wall biogenesis; peptidoglycan biosynthesis. Functionally, catalyzes the initial step of the lipid cycle reactions in the biosynthesis of the cell wall peptidoglycan: transfers peptidoglycan precursor phospho-MurNAc-pentapeptide from UDP-MurNAc-pentapeptide onto the lipid carrier undecaprenyl phosphate, yielding undecaprenyl-pyrophosphoryl-MurNAc-pentapeptide, known as lipid I. This Janthinobacterium sp. (strain Marseille) (Minibacterium massiliensis) protein is Phospho-N-acetylmuramoyl-pentapeptide-transferase.